The chain runs to 173 residues: Trafficking regulator of GLUT4 1 (173 aa).

Residues 1-17 (MANPVQPQLQDPGSTSP) are compositionally biased toward polar residues. The interval 1 to 22 (MANPVQPQLQDPGSTSPLDLPE) is disordered. The Cytoplasmic portion of the chain corresponds to 1-102 (MANPVQPQLQ…QDQEAPKDYL (102 aa)). Ser16, Ser43, Ser45, Ser70, Ser84, and Ser85 each carry phosphoserine. Residues 103–123 (VLAIASCFCPVWPLNLIPLIF) constitute an intramembrane region (helical). Over 124 to 150 (SIMSRSSVQQGDLDGARRLGRLARLLS) the chain is Cytoplasmic. The chain crosses the membrane as a helical span at residues 151-171 (ITFIILGIVIIIVAVTVNFTV). Topologically, residues 172-173 (PK) are extracellular.

Belongs to the CD225/Dispanin family. In terms of assembly, interacts with SLC2A4; the interaction is required for proper SLC2A4 reacycling after insulin stimulation. Present in adipose tissue and undetectable in other tissues (at protein level).

The protein localises to the cell membrane. It is found in the endomembrane system. The protein resides in the cytoplasm. It localises to the perinuclear region. Functionally, regulates insulin-mediated adipose tissue glucose uptake and transport by modulation of SLC2A4 recycling. Not required for SLC2A4 membrane fusion upon an initial stimulus, but rather is necessary for proper protein recycling during prolonged insulin stimulation. In Rattus norvegicus (Rat), this protein is Trafficking regulator of GLUT4 1.